An 80-amino-acid polypeptide reads, in one-letter code: EMBRYO SURROUNDING FACTOR 1-like protein 1 (80 aa).

A signal peptide spans 1–22 (MKSSHIALLCIVVLSLFALHEC). Disulfide bonds link cysteine 38-cysteine 52, cysteine 43-cysteine 78, cysteine 50-cysteine 74, and cysteine 53-cysteine 64.

Belongs to the MEG family. As to expression, expressed in leaves.

This is EMBRYO SURROUNDING FACTOR 1-like protein 1 (ESFL1) from Arabidopsis thaliana (Mouse-ear cress).